The primary structure comprises 222 residues: Glutathione S-transferase 3 (222 aa).

A GST N-terminal domain is found at 2–83 (APLKLYGMPL…YIASKYASEG (82 aa)). Glutathione contacts are provided by residues serine 12, 13–14 (PN), 41–42 (HK), 54–55 (QI), and 67–68 (ES). Positions 89–219 (ATASAAKLEV…AAIPLPPPPS (131 aa)) constitute a GST C-terminal domain.

It belongs to the GST superfamily. Phi family. Homodimer.

It carries out the reaction RX + glutathione = an S-substituted glutathione + a halide anion + H(+). In terms of biological role, conjugation of reduced glutathione to a wide number of exogenous and endogenous hydrophobic electrophiles. Involved in the detoxification of certain herbicides. This chain is Glutathione S-transferase 3, found in Zea mays (Maize).